The sequence spans 1080 residues: Ubiquitin carboxyl-terminal hydrolase 8 (1080 aa).

Residues 33 to 116 (TKNYIHSAQK…ESLKLRYEEA (84 aa)) form the MIT domain. Positions 119 to 173 (RKQLEEKDRREEEQLQQQKRQEMGREDSGAAAKRSVENLLDSKTKTQRINGEKSE) are enriched in basic and acidic residues. Residues 119–176 (RKQLEEKDRREEEQLQQQKRQEMGREDSGAAAKRSVENLLDSKTKTQRINGEKSEGAA) are disordered. Ser-160 bears the Phosphoserine mark. The region spanning 195–313 (KNTSLIIMDA…WLLCYPQFTT (119 aa)) is the Rhodanese domain. The segment covering 379-393 (ALAGPGAAPRAEASP) has biased composition (low complexity). Disordered regions lie at residues 379–455 (ALAG…TDEE), 468–605 (EKNK…RSEE), and 642–710 (PPEM…KPPC). Residue Ser-392 is modified to Phosphoserine. The short motif at 405-413 (PQVDRTKKP) is the SH3-binding element. Over residues 417-427 (LPEDHRIKSEN) the composition is skewed to basic and acidic residues. Phosphoserine is present on Ser-446. Basic and acidic residues-rich tracts occupy residues 468-535 (EKNK…RELS), 549-577 (SKSE…KRPA), and 593-605 (AQRE…RSEE). Thr-569 is modified (phosphothreonine). The segment covering 678-688 (SYSSPDITQAL) has biased composition (polar residues). Phosphoserine is present on residues Ser-680 and Ser-681. Residues 739 to 1071 (TGLRNLGNTC…AAYILFYTSL (333 aa)) enclose the USP domain. Cys-748 (nucleophile) is an active-site residue. Residue Thr-907 is modified to Phosphothreonine. His-1029 acts as the Proton acceptor in catalysis.

The protein belongs to the peptidase C19 family. Forms a ternary complex with RNF128 and OTUB1. Interacts (via C-terminal UCH catalytic domain) with OTUB1 isoform 1. Interacts with STAM2 (via SH3 domain). Interacts with DNAJB3, EGFR, EPS15, RASGRF1, RNF41, YWHAE, YWHAG and YWHAZ. Interacts with NBR1, RASGRF1, RNF41 and IST1. Associates with the ESCRT-0 complex and with microtubules. Interacts with BIRC6/bruce and KIF23/MKLP1. In terms of processing, phosphorylation of Ser-680 is essential for interaction with YWHAE and for cytosol localization. Undergoes dephosphorylation at Ser-680 in the M phase. Tyrosine-phosphorylated in its N-terminal half in an EGFR-dependent manner. Post-translationally, ubiquitinated. Inactive form is mostly monoubiquitinated, but polyubiquitination happens too. Ubiquitination is increased in EGF-stimulated cells. Ubiquitination of active form is undetectable, suggesting a possibility that USP8 deubiquitinates itself, thereby regulating its own function. In terms of tissue distribution, highly expressed in testis. Expressed at intermediate level in brain.

The protein localises to the cytoplasm. The protein resides in the nucleus. Its subcellular location is the endosome membrane. It localises to the cell membrane. The catalysed reaction is Thiol-dependent hydrolysis of ester, thioester, amide, peptide and isopeptide bonds formed by the C-terminal Gly of ubiquitin (a 76-residue protein attached to proteins as an intracellular targeting signal).. Functionally, hydrolase that can remove conjugated ubiquitin from proteins and therefore plays an important regulatory role at the level of protein turnover by preventing degradation. Converts both 'Lys-48' an 'Lys-63'-linked ubiquitin chains. Catalytic activity is enhanced in the M phase. Involved in cell proliferation. Required to enter into S phase in response to serum stimulation. May regulate T-cell anergy mediated by RNF128 via the formation of a complex containing RNF128 and OTUB1. Probably regulates the stability of STAM2 and RASGRF1. Regulates endosomal ubiquitin dynamics, cargo sorting, membrane traffic at early endosomes, and maintenance of ESCRT-0 stability. The level of protein ubiquitination on endosomes is essential for maintaining the morphology of the organelle. Deubiquitinates EPS15 and controls tyrosine kinase stability. Removes conjugated ubiquitin from EGFR thus regulating EGFR degradation and downstream MAPK signaling. Involved in acrosome biogenesis through interaction with the spermatid ESCRT-0 complex and microtubules. Deubiquitinates BIRC6/bruce and KIF23/MKLP1. Deubiquitinates BACE1 which inhibits BACE1 lysosomal degradation and modulates BACE-mediated APP cleavage and amyloid-beta formation. In Mus musculus (Mouse), this protein is Ubiquitin carboxyl-terminal hydrolase 8.